The chain runs to 151 residues: Protein Smg homolog (151 aa).

It belongs to the Smg family.

The sequence is that of Protein Smg homolog from Laribacter hongkongensis (strain HLHK9).